Here is a 708-residue protein sequence, read N- to C-terminus: Radial spoke head protein 6 homolog A (708 aa).

4 disordered regions span residues Met1–Pro94, Glu376–Lys407, Glu495–Asn514, and Gly663–Asp708. Residues Pro10 to Leu32 show a composition bias toward polar residues. Over residues Arg47–Gln56 the composition is skewed to low complexity. Positions Glu495–Gly504 are enriched in acidic residues. Low complexity predominate over residues Leu680 to Ala690. Positions Ala691 to Asp708 are enriched in acidic residues.

This sequence belongs to the flagellar radial spoke RSP4/6 family. As to quaternary structure, component of the axonemal radial spoke 1 (RS1) and 2 (RS2) complexes, at least composed of spoke head proteins RSPH1, RSPH3, RSPH9 and the cilia-specific component RSPH4A or sperm-specific component RSPH6A, spoke stalk proteins RSPH14, DNAJB13, DYDC1, ROPN1L and NME5, and the RS1 complex-specific anchor protein IQUB. Interacts with RSPH1. Interacts with RSPH3B. Interacts with RSPH4A. Interacts with RSPH9. Interacts with RSPH10B. Post-translationally, phosphorylated by PKA. Phosphorylation increases in capacitated sperm. As to expression, expressed in sperm and testis (at protein level).

The protein resides in the cytoplasm. Its subcellular location is the cytoskeleton. It is found in the flagellum axoneme. Its function is as follows. Functions as part of radial spoke complexes in the axoneme of sperm flagella that play an important part in motility. The triple radial spokes (RS1, RS2 and RS3) are required to modulate beating of the sperm flagellum. This is Radial spoke head protein 6 homolog A from Mus musculus (Mouse).